The sequence spans 449 residues: Integrator complex subunit 15 (449 aa).

The protein belongs to the Integrator subunit 15 family. As to quaternary structure, component of the Integrator complex, composed of core subunits INTS1, INTS2, INTS3, INTS4, INTS5, INTS6, INTS7, INTS8, INTS9/RC74, INTS10, INTS11/CPSF3L, INTS12, INTS13, INTS14 and INTS15. The core complex associates with protein phosphatase 2A subunits PPP2CA and PPP2R1A, to form the Integrator-PP2A (INTAC) complex. INTS15 is part of the tail subcomplex, composed of INTS10, INTS13, INTS14 and INTS15.

It is found in the nucleus. The protein resides in the chromosome. Its function is as follows. Component of the integrator complex, a multiprotein complex that terminates RNA polymerase II (Pol II) transcription in the promoter-proximal region of genes. The integrator complex provides a quality checkpoint during transcription elongation by driving premature transcription termination of transcripts that are unfavorably configured for transcriptional elongation: the complex terminates transcription by (1) catalyzing dephosphorylation of the C-terminal domain (CTD) of Pol II subunit POLR2A/RPB1 and SUPT5H/SPT5, (2) degrading the exiting nascent RNA transcript via endonuclease activity and (3) promoting the release of Pol II from bound DNA. The integrator complex is also involved in terminating the synthesis of non-coding Pol II transcripts, such as enhancer RNAs (eRNAs), small nuclear RNAs (snRNAs), telomerase RNAs and long non-coding RNAs (lncRNAs). INTS15 is part of the integrator tail module that acts as a platform for the recruitment of transcription factors at promoters. Within the integrator complex, INTS15 is required to bridge different integrator modules. The protein is Integrator complex subunit 15 of Homo sapiens (Human).